Here is a 535-residue protein sequence, read N- to C-terminus: UDP-glycosyltransferase stmC (535 aa).

N-linked (GlcNAc...) asparagine glycans are attached at residues Asn-70 and Asn-422. A helical membrane pass occupies residues 506 to 526 (ASNLDLYIVCIAFVAVPVGVA).

Belongs to the glycosyltransferase 28 family.

Its subcellular location is the membrane. The enzyme catalyses stromemycin aglycone + UDP-alpha-D-glucose = stromemycin + UDP + H(+). It carries out the reaction exophillate aglycone + UDP-alpha-D-glucose = exophillate + UDP + H(+). Its pathway is mycotoxin biosynthesis. Functionally, UDP-glycosyltransferase; part of the gene cluster that mediates the biosynthesis of stromemycin, a depside C-glucoside with two unsaturated C9 side chains belonging to aromatic polyketide glycosides. Acts as the tailoring enzyme responsible for 3-C-glucosylation of bininalkenylresorcylic acid produced by the combined action of the HR-PKS stmA and the NR-PKS stmB to yield stromemycin. Possesses a relatively strict acceptor specificity towards bininalkenylresorcylic acid for C-glycosylation, but is able to use several donors including UDP-alpha-D-galactose, UDP-alpha-D-xylose, UDP-alpha-D-4-keto-6-deoxyglucose, UDP-alpha-D-quinovose, and UDP-beta-L-rhamnose. In Aspergillus ustus, this protein is UDP-glycosyltransferase stmC.